The following is a 173-amino-acid chain: NADH-quinone oxidoreductase subunit I 1 (173 aa).

2 consecutive 4Fe-4S ferredoxin-type domains span residues 41 to 73 (IVLT…LAKA) and 83 to 112 (EHFR…LTPD). [4Fe-4S] cluster-binding residues include C53, C56, C59, C63, C92, C95, C98, and C102.

Belongs to the complex I 23 kDa subunit family. As to quaternary structure, NDH-1 is composed of 14 different subunits. Subunits NuoA, H, J, K, L, M, N constitute the membrane sector of the complex. Requires [4Fe-4S] cluster as cofactor.

The protein resides in the cell inner membrane. It carries out the reaction a quinone + NADH + 5 H(+)(in) = a quinol + NAD(+) + 4 H(+)(out). Functionally, NDH-1 shuttles electrons from NADH, via FMN and iron-sulfur (Fe-S) centers, to quinones in the respiratory chain. The immediate electron acceptor for the enzyme in this species is believed to be ubiquinone. Couples the redox reaction to proton translocation (for every two electrons transferred, four hydrogen ions are translocated across the cytoplasmic membrane), and thus conserves the redox energy in a proton gradient. This Rhodopseudomonas palustris (strain BisA53) protein is NADH-quinone oxidoreductase subunit I 1.